The following is a 105-amino-acid chain: Nucleoid-associated protein Lm4b_02677 (105 aa).

Low complexity predominate over residues 1–16 (MRGMGNMQGMMKQMQK). Residues 1–23 (MRGMGNMQGMMKQMQKMQKEMAK) are disordered.

This sequence belongs to the YbaB/EbfC family. In terms of assembly, homodimer.

It localises to the cytoplasm. It is found in the nucleoid. Binds to DNA and alters its conformation. May be involved in regulation of gene expression, nucleoid organization and DNA protection. The sequence is that of Nucleoid-associated protein Lm4b_02677 from Listeria monocytogenes serotype 4b (strain CLIP80459).